The sequence spans 430 residues: Adenylosuccinate synthetase (430 aa).

GTP is bound by residues 12–18 (GDEGKGK) and 40–42 (GHT). The active-site Proton acceptor is D13. Mg(2+) contacts are provided by D13 and G40. Residues 13–16 (DEGK), 38–41 (NAGH), T128, R142, Q223, T238, and R302 contribute to the IMP site. The active-site Proton donor is the H41. 298–304 (TTTGRPR) lines the substrate pocket. Residues R304, 330-332 (LLD), and 412-414 (SVG) contribute to the GTP site.

The protein belongs to the adenylosuccinate synthetase family. As to quaternary structure, homodimer. Mg(2+) serves as cofactor.

It is found in the cytoplasm. The enzyme catalyses IMP + L-aspartate + GTP = N(6)-(1,2-dicarboxyethyl)-AMP + GDP + phosphate + 2 H(+). It functions in the pathway purine metabolism; AMP biosynthesis via de novo pathway; AMP from IMP: step 1/2. Plays an important role in the de novo pathway of purine nucleotide biosynthesis. Catalyzes the first committed step in the biosynthesis of AMP from IMP. The polypeptide is Adenylosuccinate synthetase (Listeria innocua serovar 6a (strain ATCC BAA-680 / CLIP 11262)).